A 484-amino-acid polypeptide reads, in one-letter code: Cobyric acid synthase (484 aa).

The 188-residue stretch at 248–435 (VLKVIVPVLP…LHGLFEGSQS (188 aa)) folds into the GATase cobBQ-type domain. The active-site Nucleophile is the cysteine 329. The active site involves histidine 427.

The protein belongs to the CobB/CobQ family. CobQ subfamily.

Its pathway is cofactor biosynthesis; adenosylcobalamin biosynthesis. Functionally, catalyzes amidations at positions B, D, E, and G on adenosylcobyrinic A,C-diamide. NH(2) groups are provided by glutamine, and one molecule of ATP is hydrogenolyzed for each amidation. In Pseudomonas putida (strain GB-1), this protein is Cobyric acid synthase.